A 584-amino-acid chain; its full sequence is Protein FAM117B (584 aa).

The disordered stretch occupies residues 1–214; the sequence is MSQRVRRNGS…SSSSSIIRRT (214 aa). Phosphoserine is present on S10. Residues 53-79 show a composition bias toward gly residues; it reads TRGGGGGGNNGGNGGASGPSGGGGSGG. Positions 80-90 are enriched in low complexity; it reads PRTASRSTSPT. Phosphoserine is present on S102. Residues 114-132 show a composition bias toward low complexity; sequence TSTRGTSPTRGTAPGARSS. Over residues 133–142 the composition is skewed to pro residues; it reads PPRPQPPPPL. The segment covering 145–154 has biased composition (polar residues); that stretch reads TVSSPSSSPT. The span at 204 to 214 shows a compositional bias: low complexity; the sequence is SSSSSSIIRRT. Phosphoserine is present on residues S206, S215, S216, and S268. 2 disordered regions span residues 227–461 and 551–584; these read GHWP…SYMF and STNTEQERVSRGTSTVLPSASLHAPPEPIEEAEG. Positions 287–297 are enriched in basic residues; sequence RSKHSSRHHRD. S340 bears the Phosphoserine mark. Residues 350-361 are compositionally biased toward basic and acidic residues; sequence IIIKETGEKEEQ. Positions 379-392 are enriched in polar residues; sequence QRSSSTRSIDTQTP. S386 bears the Phosphoserine mark. Residues 399–412 show a composition bias toward low complexity; the sequence is SNNSSRSQSVSPTS. S444 and S452 each carry phosphoserine.

In Mus musculus (Mouse), this protein is Protein FAM117B (Fam117b).